We begin with the raw amino-acid sequence, 406 residues long: Phosphopentomutase (406 aa).

6 residues coordinate Mn(2+): D10, D305, H310, D346, H347, and H358.

This sequence belongs to the phosphopentomutase family. Mn(2+) serves as cofactor.

The protein localises to the cytoplasm. The enzyme catalyses 2-deoxy-alpha-D-ribose 1-phosphate = 2-deoxy-D-ribose 5-phosphate. It carries out the reaction alpha-D-ribose 1-phosphate = D-ribose 5-phosphate. Its pathway is carbohydrate degradation; 2-deoxy-D-ribose 1-phosphate degradation; D-glyceraldehyde 3-phosphate and acetaldehyde from 2-deoxy-alpha-D-ribose 1-phosphate: step 1/2. In terms of biological role, isomerase that catalyzes the conversion of deoxy-ribose 1-phosphate (dRib-1-P) and ribose 1-phosphate (Rib-1-P) to deoxy-ribose 5-phosphate (dRib-5-P) and ribose 5-phosphate (Rib-5-P), respectively. In Vibrio campbellii (strain ATCC BAA-1116), this protein is Phosphopentomutase.